The following is a 464-amino-acid chain: Soluble pyridine nucleotide transhydrogenase (464 aa).

FAD is bound at residue 35–44 (DSRREVGGNC).

It belongs to the class-I pyridine nucleotide-disulfide oxidoreductase family. The cofactor is FAD.

It is found in the cytoplasm. The catalysed reaction is NAD(+) + NADPH = NADH + NADP(+). Its function is as follows. Conversion of NADPH, generated by peripheral catabolic pathways, to NADH, which can enter the respiratory chain for energy generation. This chain is Soluble pyridine nucleotide transhydrogenase, found in Pseudomonas syringae pv. tomato (strain ATCC BAA-871 / DC3000).